Consider the following 274-residue polypeptide: Large ribosomal subunit protein uL2cz/uL2cy (274 aa).

Disordered stretches follow at residues 1–21 (MAIH…VDSQ) and 225–274 (PVDH…RRSK).

This sequence belongs to the universal ribosomal protein uL2 family. As to quaternary structure, part of the 50S ribosomal subunit.

Its subcellular location is the plastid. The protein localises to the chloroplast. This chain is Large ribosomal subunit protein uL2cz/uL2cy (rpl2-A), found in Gossypium barbadense (Sea Island cotton).